The chain runs to 66 residues: QTQNAHLEFVEVLNVKEQVVAGMMYYITLVATDDGYKKIYKTKIWVKEWENFKEVQEFKQIVYATK.

Residues 18 to 22 (QVVAG) carry the Secondary area of contact motif.

The protein belongs to the cystatin family. Phytocystatin subfamily. In tubers of untreated plants. After ABA treatment or mechanical wounding is mostly accumulated in leaves, to a lesser extent in stems, but not in roots.

This chain is Cysteine proteinase inhibitor (CYS-PIN), found in Solanum tuberosum (Potato).